Reading from the N-terminus, the 300-residue chain is Haloalkane dehalogenase (300 aa).

Residues 32–155 (AIVFQHGNPT…PAVRGVFQGF (124 aa)) form the AB hydrolase-1 domain. Residue Asp109 is the Nucleophile of the active site. The Proton donor role is filled by Glu133. Catalysis depends on His273, which acts as the Proton acceptor.

It belongs to the haloalkane dehalogenase family. Type 2 subfamily. Monomer.

It catalyses the reaction 1-haloalkane + H2O = a halide anion + a primary alcohol + H(+). Catalyzes hydrolytic cleavage of carbon-halogen bonds in halogenated aliphatic compounds, leading to the formation of the corresponding primary alcohols, halide ions and protons. The sequence is that of Haloalkane dehalogenase from Mycobacterium tuberculosis (strain ATCC 25177 / H37Ra).